Consider the following 31-residue polypeptide: MEAIVYTFLLVGTLGIIFFAIFFREPPRIAK.

Residues 3-23 form a helical membrane-spanning segment; the sequence is AIVYTFLLVGTLGIIFFAIFF.

Belongs to the PsbT family. As to quaternary structure, PSII is composed of 1 copy each of membrane proteins PsbA, PsbB, PsbC, PsbD, PsbE, PsbF, PsbH, PsbI, PsbJ, PsbK, PsbL, PsbM, PsbT, PsbY, PsbZ, Psb30/Ycf12, at least 3 peripheral proteins of the oxygen-evolving complex and a large number of cofactors. It forms dimeric complexes.

It is found in the plastid. It localises to the chloroplast thylakoid membrane. Found at the monomer-monomer interface of the photosystem II (PS II) dimer, plays a role in assembly and dimerization of PSII. PSII is a light-driven water plastoquinone oxidoreductase, using light energy to abstract electrons from H(2)O, generating a proton gradient subsequently used for ATP formation. In Ostreococcus tauri, this protein is Photosystem II reaction center protein T.